We begin with the raw amino-acid sequence, 548 residues long: Tryprostatin B 6-hydroxylase (548 aa).

3 helical membrane passes run 5 to 25, 35 to 54, and 73 to 93; these read MKCG…LWYF, WRYV…LLYA, and LLMV…RTLF. Residue Cys491 coordinates heme.

This sequence belongs to the cytochrome P450 family. Heme serves as cofactor.

Its subcellular location is the membrane. The enzyme catalyses tryprostatin B + reduced [NADPH--hemoprotein reductase] + O2 = 6-hydroxytryprostatin B + oxidized [NADPH--hemoprotein reductase] + H2O + H(+). It functions in the pathway mycotoxin biosynthesis. Functionally, cytochrome P450 monooxygenase; part of the gene cluster that mediates the biosynthesis of fumitremorgins, indole alkaloids that carry not only intriguing chemical structures, but also interesting biological and pharmacological activities. The biosynthesis of fumitremorgin-type alkaloids begins by condensation of the two amino acids L-tryptophan and L-proline to brevianamide F, catalyzed by the non-ribosomal peptide synthetase ftmPS/ftmA. Brevianamide F is then prenylated by the prenyltransferase ftmPT1/ftmB in the presence of dimethylallyl diphosphate, resulting in the formation of tryprostatin B. The three cytochrome P450 monooxygenases, ftmP450-1/ftmC, ftmP450-2/ftmE and ftmP450-3/FtmG, are responsible for the conversion of tryprostatin B to 6-hydroxytryprostatin B, tryprostatin A to fumitremorgin C and fumitremorgin C to 12,13-dihydroxyfumitremorgin C, respectively. The putative methyltransferase ftmMT/ftmD is expected for the conversion of 6-hydroxytryprostatin B to tryprostatin A. FtmPT2/FtmH catalyzes the prenylation of 12,13-dihydroxyfumitre-morgin C in the presence of dimethylallyl diphosphate, resulting in the formation of fumitremorgin B. Fumitremorgin B is further converted to verruculogen by ftmOx1/ftmF via the insertion of an endoperoxide bond between the two prenyl moieties. Finally, verruculogen is further converted to fumitremorgin A by the verruculogen prenyltransferase ftmPT3. This Neosartorya fischeri (strain ATCC 1020 / DSM 3700 / CBS 544.65 / FGSC A1164 / JCM 1740 / NRRL 181 / WB 181) (Aspergillus fischerianus) protein is Tryprostatin B 6-hydroxylase.